Here is a 689-residue protein sequence, read N- to C-terminus: DNA polymerase epsilon subunit B (689 aa).

Basic and acidic residues predominate over residues 98–115 (EWSHEHPIQHEENILGRT). Residues 98-155 (EWSHEHPIQHEENILGRTDDDENNSDDEMPIAADSSLQNVSLSSPMRQPTERDEYKQP) form a disordered region. Over residues 116-126 (DDDENNSDDEM) the composition is skewed to acidic residues. Residue serine 122 is modified to Phosphoserine. Polar residues predominate over residues 132 to 144 (SSLQNVSLSSPMR). At serine 141 the chain carries Phosphoserine; by CDC28. The segment covering 146–155 (PTERDEYKQP) has biased composition (basic and acidic residues). Residue serine 613 is modified to Phosphoserine.

Belongs to the DNA polymerase epsilon subunit B family. In terms of assembly, DNA polymerase epsilon is a heterotetramer consisting of POL2, DPB2, DPB3 and DPB4. Post-translationally, phosphorylated in a cell cycle dependent manner during late G1 phase. Phosphorylation may facilitate the interaction with POL2 or the activity of DNA polymerase II. Phosphorylation is independent of DNA replication but dependent upon CDC28 in vivo. Both Ser-141 and Ser-613 are phosphorylated in vivo, but in vitro only Ser-141 is phosphorylated by CDC28.

Its subcellular location is the cytoplasm. It is found in the nucleus. Functionally, as accessory component of the DNA polymerase epsilon complex participates in chromosomal DNA replication. It is required during synthesis of the leading and lagging DNA strands at the replication fork and binds at/or near replication origins and moves along DNA with the replication fork. It has 3'-5' proofreading exonuclease activity that correct errors arising during DNA replication. It is also involved in DNA synthesis during DNA repair. The polypeptide is DNA polymerase epsilon subunit B (DPB2) (Saccharomyces cerevisiae (strain ATCC 204508 / S288c) (Baker's yeast)).